We begin with the raw amino-acid sequence, 98 residues long: Class II hydrophobin 5 (98 aa).

An N-terminal signal peptide occupies residues 1-17 (MQFSLALVTLLATAVSA). Intrachain disulfides connect cysteine 30–cysteine 78, cysteine 39–cysteine 69, cysteine 40–cysteine 52, and cysteine 79–cysteine 90.

It belongs to the cerato-ulmin hydrophobin family.

It localises to the secreted. Its subcellular location is the cell wall. Functionally, aerial growth, conidiation, and dispersal of filamentous fungi in the environment rely upon a capability of their secreting small amphipathic proteins called hydrophobins (HPBs) with low sequence identity. Class I can self-assemble into an outermost layer of rodlet bundles on aerial cell surfaces, conferring cellular hydrophobicity that supports fungal growth, development and dispersal; whereas Class II form highly ordered films at water-air interfaces through intermolecular interactions but contribute nothing to the rodlet structure. Does not seem to be important for the ability to cause seedling disease. The protein is Class II hydrophobin 5 of Gibberella moniliformis (Maize ear and stalk rot fungus).